Here is a 259-residue protein sequence, read N- to C-terminus: Dihydroorotate dehydrogenase B (NAD(+)), electron transfer subunit (259 aa).

Residues 2-102 (MQKQNMIVVN…LGPLGHGFPV (101 aa)) form the FAD-binding FR-type domain. FAD-binding positions include 53 to 56 (RPIS), 70 to 72 (LYR), and 77 to 78 (GT). Cysteine 221, cysteine 226, cysteine 229, and cysteine 246 together coordinate [2Fe-2S] cluster.

It belongs to the PyrK family. In terms of assembly, heterotetramer of 2 PyrK and 2 PyrD type B subunits. It depends on [2Fe-2S] cluster as a cofactor. The cofactor is FAD.

It participates in pyrimidine metabolism; UMP biosynthesis via de novo pathway; orotate from (S)-dihydroorotate (NAD(+) route): step 1/1. Responsible for channeling the electrons from the oxidation of dihydroorotate from the FMN redox center in the PyrD type B subunit to the ultimate electron acceptor NAD(+). In Bacillus mycoides (strain KBAB4) (Bacillus weihenstephanensis), this protein is Dihydroorotate dehydrogenase B (NAD(+)), electron transfer subunit.